The sequence spans 354 residues: Uroporphyrinogen decarboxylase (354 aa).

Substrate contacts are provided by residues 27–31 (RQAGR), Phe-46, Asp-77, Tyr-154, Thr-209, and His-327.

Belongs to the uroporphyrinogen decarboxylase family. Homodimer.

It localises to the cytoplasm. The enzyme catalyses uroporphyrinogen III + 4 H(+) = coproporphyrinogen III + 4 CO2. It functions in the pathway porphyrin-containing compound metabolism; protoporphyrin-IX biosynthesis; coproporphyrinogen-III from 5-aminolevulinate: step 4/4. Catalyzes the decarboxylation of four acetate groups of uroporphyrinogen-III to yield coproporphyrinogen-III. The protein is Uroporphyrinogen decarboxylase of Photorhabdus laumondii subsp. laumondii (strain DSM 15139 / CIP 105565 / TT01) (Photorhabdus luminescens subsp. laumondii).